The sequence spans 123 residues: DNA-directed RNA polymerase I subunit RPA12 (123 aa).

The Zn(2+) site is built by Cys17, Cys20, Cys35, Cys38, Cys84, and Cys87. The C4-type zinc-finger motif lies at 17–38; sequence CPDCGSVLPLPGIQDTVICSRC. Residues 80-120 form a TFIIS-type zinc finger; sequence IDRRCPRCGHEGMAYHTRQMRSADEGQTVFYTCINCKFQEK. The short motif at 103 to 104 is the Hairpin element; the sequence is DE. Zn(2+)-binding residues include Cys112 and Cys115.

It belongs to the archaeal RpoM/eukaryotic RPA12/RPB9/RPC11 RNA polymerase family. Component of the RNA polymerase I (Pol I) complex consisting of 13 subunits: a ten-subunit catalytic core composed of POLR1A/RPA1, POLR1B/RPA2, POLR1C/RPAC1, POLR1D/RPAC2, POLR1H/RPA12, POLR2E/RPABC1, POLR2F/RPABC2, POLR2H/RPABC3, POLR2K/RPABC4 and POLR2L/RPABC5; a mobile stalk subunit POLR1F/RPA43 protruding from the core and additional subunits homologous to general transcription factors POLR1E/RPA49 and POLR1G/RPA34. Part of Pol I pre-initiation complex (PIC), in which Pol I core assembles with RRN3 and promoter-bound UTBF and SL1/TIF-IB complex.

The protein localises to the nucleus. It is found in the nucleolus. Core component of RNA polymerase I (Pol I), a DNA-dependent RNA polymerase which synthesizes ribosomal RNA precursors using the four ribonucleoside triphosphates as substrates. Can mediate Pol I proofreading of the nascent RNA transcript. Anchors into the Pol I active site to monitor transcription fidelity and cleave mis-incorporated 5'-ribonucleotides. In Mus musculus (Mouse), this protein is DNA-directed RNA polymerase I subunit RPA12.